The sequence spans 472 residues: N(6)-adenine-specific methyltransferase METTL4 (472 aa).

It belongs to the MT-A70-like family.

It localises to the nucleus. The protein localises to the cytoplasm. Its subcellular location is the cytosol. The protein resides in the mitochondrion matrix. It carries out the reaction a 2'-O-methyladenosine in U2 snRNA + S-adenosyl-L-methionine = an N(6)-methyl-2'-O-methyladenosine in U2 snRNA + S-adenosyl-L-homocysteine + H(+). It catalyses the reaction a 2'-deoxyadenosine in DNA + S-adenosyl-L-methionine = an N(6)-methyl-2'-deoxyadenosine in DNA + S-adenosyl-L-homocysteine + H(+). Functionally, n(6)-adenine-specific methyltransferase that can methylate both RNAs and DNA. Acts as a N(6)-adenine-specific RNA methyltransferase by catalyzing formation of N6,2'-O-dimethyladenosine (m6A(m)) on internal positions of U2 small nuclear RNA (snRNA): methylates the 6th position of adenine residues with a pre-deposited 2'-O-methylation. Internal m6A(m) methylation of snRNAs regulates RNA splicing. Also able to act as a N(6)-adenine-specific DNA methyltransferase by mediating methylation of DNA on the 6th position of adenine (N(6)-methyladenosine). The existence of N(6)-methyladenosine (m6A) on DNA is however unclear in mammals, and additional evidences are required to confirm the role of the N(6)-adenine-specific DNA methyltransferase activity of METTL4 in vivo. Acts as a regulator of mitochondrial transcript levels and mitochondrial DNA (mtDNA) copy number by mediating mtDNA N(6)-methylation: m6A on mtDNA reduces transcription by repressing TFAM DNA-binding and bending. N(6)-methyladenosine deposition by METTL4 regulates Polycomb silencing by triggering ubiquitination and degradation of sensor proteins ASXL1 and MPND, leading to inactivation of the PR-DUB complex and subsequent preservation of Polycomb silencing. The protein is N(6)-adenine-specific methyltransferase METTL4 of Homo sapiens (Human).